The chain runs to 399 residues: Homocysteine-responsive endoplasmic reticulum-resident ubiquitin-like domain member 2 protein (399 aa).

The Ubiquitin-like domain maps to 10 to 89; it reads VTLVIKAPNQ…HMVHLVCASR (80 aa). 2 disordered regions span residues 88 to 144 and 211 to 250; these read SRTP…SIRH and ASNQ…APEM. Residues 95–106 show a composition bias toward polar residues; it reads PKASTSNKSMGT. The segment covering 107 to 124 has biased composition (low complexity); the sequence is ASISRSSSEHSGSASPAS. Positions 211–221 are enriched in polar residues; sequence ASNQSPSNGEN. Residues 234–246 are compositionally biased toward pro residues; it reads SPPPNPPRAPPNV. Residues 299-319 form a helical membrane-spanning segment; it reads FVMVMGAMILVYMHQAGWFPL.

It is found in the membrane. Its function is as follows. Could be involved in the unfolded protein response (UPR) pathway. This Xenopus tropicalis (Western clawed frog) protein is Homocysteine-responsive endoplasmic reticulum-resident ubiquitin-like domain member 2 protein (herpud2).